A 251-amino-acid polypeptide reads, in one-letter code: Octanoyltransferase (251 aa).

The region spanning Gly-29–Val-216 is the BPL/LPL catalytic domain. Substrate is bound by residues Arg-74–His-81, Ala-146–Gly-148, and Gly-159–Ala-161. The Acyl-thioester intermediate role is filled by Cys-177.

Belongs to the LipB family.

It localises to the cytoplasm. It catalyses the reaction octanoyl-[ACP] + L-lysyl-[protein] = N(6)-octanoyl-L-lysyl-[protein] + holo-[ACP] + H(+). It participates in protein modification; protein lipoylation via endogenous pathway; protein N(6)-(lipoyl)lysine from octanoyl-[acyl-carrier-protein]: step 1/2. Its function is as follows. Catalyzes the transfer of endogenously produced octanoic acid from octanoyl-acyl-carrier-protein onto the lipoyl domains of lipoate-dependent enzymes. Lipoyl-ACP can also act as a substrate although octanoyl-ACP is likely to be the physiological substrate. This chain is Octanoyltransferase, found in Koribacter versatilis (strain Ellin345).